The chain runs to 366 residues: Chorismate synthase (366 aa).

Residue Arg-48 coordinates NADP(+). FMN is bound by residues 131–133, 243–244, Gly-288, 303–307, and Arg-329; these read RAS, NA, and KPTSS.

It belongs to the chorismate synthase family. In terms of assembly, homotetramer. FMNH2 serves as cofactor.

It catalyses the reaction 5-O-(1-carboxyvinyl)-3-phosphoshikimate = chorismate + phosphate. The protein operates within metabolic intermediate biosynthesis; chorismate biosynthesis; chorismate from D-erythrose 4-phosphate and phosphoenolpyruvate: step 7/7. Its function is as follows. Catalyzes the anti-1,4-elimination of the C-3 phosphate and the C-6 proR hydrogen from 5-enolpyruvylshikimate-3-phosphate (EPSP) to yield chorismate, which is the branch point compound that serves as the starting substrate for the three terminal pathways of aromatic amino acid biosynthesis. This reaction introduces a second double bond into the aromatic ring system. The chain is Chorismate synthase from Bartonella henselae (strain ATCC 49882 / DSM 28221 / CCUG 30454 / Houston 1) (Rochalimaea henselae).